The primary structure comprises 157 residues: Probable succinate transporter subunit YjjB (157 aa).

A run of 4 helical transmembrane segments spans residues L8–F28, M50–G70, V87–I107, and F129–W149.

It belongs to the ThrE exporter (TC 2.A.79) family. As to quaternary structure, the transporter is composed of YjjB and YjjP.

The protein localises to the cell inner membrane. Involved in succinate export with YjjP. Both proteins are required for export. The protein is Probable succinate transporter subunit YjjB of Escherichia coli O157:H7 (strain EC4115 / EHEC).